The following is a 396-amino-acid chain: 3-amino-4-hydroxybenzoate 2-monooxygenase PtmB3 (396 aa).

Residues alanine 19, glutamate 38–glutamine 39, and arginine 112 contribute to the FAD site. Catalysis depends on tyrosine 217, which acts as the Proton acceptor. Position 295 (aspartate 295) interacts with FAD. The interval arginine 352–arginine 371 is disordered.

The protein belongs to the 6-hydroxynicotinate 3-monooxygenase family. The cofactor is FAD.

It carries out the reaction 3-amino-4-hydroxybenzoate + NADPH + O2 + H(+) = 3-amino-2,4-dihydroxybenzoate + NADP(+) + H2O. It participates in antibiotic biosynthesis. In terms of biological role, part of a gene cluster involved in the biosynthesis of thioplatensimycin (thioPTM) and platensimycin (PTM), potent and selective inhibitors of bacterial and mammalian fatty acid synthases. Catalyzes the hydroxylation of 3-amino-4-hydroxybenzoate (3,4-AHBA) to 3-amino-2,4-dihydroxybenzoate (3,2,4-ADHBA). The protein is 3-amino-4-hydroxybenzoate 2-monooxygenase PtmB3 of Streptomyces platensis.